Consider the following 99-residue polypeptide: Cell division protein FtsB (99 aa).

The Cytoplasmic portion of the chain corresponds to 1 to 3; it reads MRV. A helical membrane pass occupies residues 4–21; the sequence is FTAILLILLVLLQYRLWF. Residues 22 to 99 are Periplasmic-facing; the sequence is GKNSVPDYLV…KENSTRNVNN (78 aa). Residues 29–53 are a coiled coil; it reads YLVLKENVVRQQSANEKLQQRNKLL.

Belongs to the FtsB family. In terms of assembly, part of a complex composed of FtsB, FtsL and FtsQ.

The protein localises to the cell inner membrane. Its function is as follows. Essential cell division protein. May link together the upstream cell division proteins, which are predominantly cytoplasmic, with the downstream cell division proteins, which are predominantly periplasmic. The protein is Cell division protein FtsB of Colwellia psychrerythraea (strain 34H / ATCC BAA-681) (Vibrio psychroerythus).